We begin with the raw amino-acid sequence, 365 residues long: Peptide chain release factor 2 (365 aa).

Q251 carries the post-translational modification N5-methylglutamine.

Belongs to the prokaryotic/mitochondrial release factor family. Methylated by PrmC. Methylation increases the termination efficiency of RF2.

Its subcellular location is the cytoplasm. Its function is as follows. Peptide chain release factor 2 directs the termination of translation in response to the peptide chain termination codons UGA and UAA. This chain is Peptide chain release factor 2, found in Neorickettsia sennetsu (strain ATCC VR-367 / Miyayama) (Ehrlichia sennetsu).